The chain runs to 410 residues: Exopolygalacturonase (410 aa).

Positions 1–22 are cleaved as a signal peptide; the sequence is MACIDNAMRALFLLALFCVVHG. N-linked (GlcNAc...) asparagine glycosylation is found at Asn89 and Asn201. 5 PbH1 repeats span residues 192 to 218, 219 to 240, 242 to 262, 272 to 293, and 337 to 377; these read CKDM…HMGD, SSGV…SIGP, TSKV…SIGS, VTDI…RIKA, and ASKV…TMDD. Asp233 serves as the catalytic Proton donor. The cysteines at positions 235 and 252 are disulfide-linked. N-linked (GlcNAc...) asparagine glycosylation occurs at Asn246. His256 is a catalytic residue. Asn349 carries N-linked (GlcNAc...) asparagine glycosylation. A disulfide bridge links Cys364 with Cys370. Residue Asn387 is glycosylated (N-linked (GlcNAc...) asparagine). Cysteines 393 and 409 form a disulfide.

Belongs to the glycosyl hydrolase 28 family. In terms of tissue distribution, pollen.

It localises to the secreted. The protein localises to the cell wall. The enzyme catalyses [(1-&gt;4)-alpha-D-galacturonosyl](n) + H2O = alpha-D-galacturonate + [(1-&gt;4)-alpha-D-galacturonosyl](n-1). In terms of biological role, may function in depolymerizing pectin during pollen development, germination, and tube growth. Acts as an exo-polygalacturonase. This Zea mays (Maize) protein is Exopolygalacturonase (PG2C).